We begin with the raw amino-acid sequence, 125 residues long: Large ribosomal subunit protein bL12 (125 aa).

This sequence belongs to the bacterial ribosomal protein bL12 family. Homodimer. Part of the ribosomal stalk of the 50S ribosomal subunit. Forms a multimeric L10(L12)X complex, where L10 forms an elongated spine to which 2 to 4 L12 dimers bind in a sequential fashion. Binds GTP-bound translation factors.

In terms of biological role, forms part of the ribosomal stalk which helps the ribosome interact with GTP-bound translation factors. Is thus essential for accurate translation. This Campylobacter jejuni subsp. jejuni serotype O:2 (strain ATCC 700819 / NCTC 11168) protein is Large ribosomal subunit protein bL12.